The primary structure comprises 451 residues: Glucose-6-phosphate isomerase (451 aa).

The active-site Proton donor is glutamate 291. Active-site residues include histidine 312 and lysine 426.

Belongs to the GPI family.

It localises to the cytoplasm. It catalyses the reaction alpha-D-glucose 6-phosphate = beta-D-fructose 6-phosphate. Its pathway is carbohydrate biosynthesis; gluconeogenesis. The protein operates within carbohydrate degradation; glycolysis; D-glyceraldehyde 3-phosphate and glycerone phosphate from D-glucose: step 2/4. Its function is as follows. Catalyzes the reversible isomerization of glucose-6-phosphate to fructose-6-phosphate. This chain is Glucose-6-phosphate isomerase, found in Thermoanaerobacter sp. (strain X514).